The sequence spans 37 residues: Cytochrome b6-f complex subunit 5 (37 aa).

A helical transmembrane segment spans residues 5 to 25 (LLSGIVPGLIPITLAGSFVIA).

The protein belongs to the PetG family. In terms of assembly, the 4 large subunits of the cytochrome b6-f complex are cytochrome b6, subunit IV (17 kDa polypeptide, PetD), cytochrome f and the Rieske protein, while the 4 small subunits are PetG, PetL, PetM and PetN. The complex functions as a dimer.

Its subcellular location is the plastid membrane. Component of the cytochrome b6-f complex, which mediates electron transfer between photosystem II (PSII) and photosystem I (PSI), cyclic electron flow around PSI, and state transitions. PetG is required for either the stability or assembly of the cytochrome b6-f complex. This chain is Cytochrome b6-f complex subunit 5, found in Aneura mirabilis (Parasitic liverwort).